A 289-amino-acid polypeptide reads, in one-letter code: Carbonyl reductase [NADPH] 1 (289 aa).

N-acetylserine is present on Ser2. Ser2 bears the Phosphoserine mark. NADP(+) is bound by residues 10–34, 63–64, and Asn90; these read VTGANKGIGFAIVRDLCRQFAGDVV and DI. Residues 95 to 97 and Gln106 each bind glutathione; that span reads FQL. A substrate-binding site is contributed by Ser140. 193-194 serves as a coordination point for glutathione; it reads TY. The Proton acceptor role is filled by Tyr194. NADP(+) contacts are provided by residues 194-198 and 231-233; these read YGVTK and VRT. Residue Lys239 is modified to N6-1-carboxyethyl lysine.

This sequence belongs to the short-chain dehydrogenases/reductases (SDR) family. Monomer. Expressed in kidney (at protein level).

Its subcellular location is the cytoplasm. It carries out the reaction a secondary alcohol + NADP(+) = a ketone + NADPH + H(+). The catalysed reaction is prostaglandin E1 + NADP(+) = 15-oxoprostaglandin E1 + NADPH + H(+). It catalyses the reaction prostaglandin F2alpha + NADP(+) = prostaglandin E2 + NADPH + H(+). The enzyme catalyses prostaglandin D2 + NADP(+) = 15-oxoprostaglandin D2 + NADPH + H(+). It carries out the reaction prostaglandin E2 + NADP(+) = 15-oxoprostaglandin E2 + NADPH + H(+). The catalysed reaction is prostaglandin F2alpha + NADP(+) = 15-oxoprostaglandin F2alpha + NADPH + H(+). It catalyses the reaction menadione + NADPH + H(+) = menadiol + NADP(+). The enzyme catalyses daunorubicin + NADPH + H(+) = 13-dihydrodaunorubicin + NADP(+). It carries out the reaction S-nitrosoglutathione + NADPH + H(+) = S-(hydroxysulfenamide)glutathione + NADP(+). The catalysed reaction is a primary alcohol + NADP(+) = an aldehyde + NADPH + H(+). It catalyses the reaction cortisol + NADPH + H(+) = 20beta-dihydrocortisol + NADP(+). The enzyme catalyses corticosterone + NADPH + H(+) = 20beta-dihydrocorticosterone + NADP(+). Functionally, NADPH-dependent reductase with broad substrate specificity. Catalyzes the reduction of a wide variety of carbonyl compounds including quinones, prostaglandins, menadione, plus various xenobiotics. Catalyzes the reduction of the antitumor anthracyclines doxorubicin and daunorubicin to the cardiotoxic compounds doxorubicinol and daunorubicinol. Can convert prostaglandin E2 to prostaglandin F2-alpha. Can bind glutathione, which explains its higher affinity for glutathione-conjugated substrates. Catalyzes the reduction of S-nitrosoglutathione. In addition, participates in the glucocorticoid metabolism by catalyzing the NADPH-dependent cortisol/corticosterone into 20beta-dihydrocortisol (20b-DHF) or 20beta-corticosterone (20b-DHB), which are weak agonists of NR3C1 and NR3C2 in adipose tissue. This Sus scrofa (Pig) protein is Carbonyl reductase [NADPH] 1.